Consider the following 275-residue polypeptide: Lycopene elongase/hydratase (275 aa).

Helical transmembrane passes span 13–33 (FWLYLAGPVLVGVSYGATTVG), 38–58 (APAVVLFSYFLLPANIYLYGI), 84–104 (AAVAVIVAVCGVFLGFVAAPL), 107–127 (EAWPYLAAWFVLATEYSAPPL), 134–154 (VLDSLSNGLYVLPAAAAYAGV), 160–180 (PLLAVAGGWLWAMGMHTFSAI), 203–223 (ALAYCAGIWLLSAAVFALVDV), 225–245 (FGLLLLAYPVLVFGIRRLQVA), and 253–273 (YPAVNTLVGMVFTLGGLWGVV).

Belongs to the UbiA prenyltransferase family.

The protein localises to the cell membrane. It carries out the reaction all-trans-lycopene + dimethylallyl diphosphate + H2O = dihydroisopentenyldehydrorhodopin + diphosphate. The enzyme catalyses isopentenyldehydrorhodopin + dimethylallyl diphosphate + H2O = dihydrobisanhydrobacterioruberin + diphosphate. The protein operates within carotenoid biosynthesis. With respect to regulation, inhibited by bacterioopsin. In terms of biological role, involved in the biosynthesis of the acyclic C50 carotenoid bacterioruberin (BR). Acts as a bifunctional elongase/hydratase that catalyzes the elongation of lycopene by attaching a C(5) isoprene unit at C-2, as well as the hydroxylation of the previous end of the molecule. The enzyme acts at both ends of the substrate, and catalyzes the conversion of lycopene to the C(45) intermediate dihydroisopentenyldehydrorhodopin (DH-IDR) and the conversion of isopentenyldehydrorhodopin (IDR) to the C(50) carotenoid dihydrobisanhydrobacterioruberin (DH-BABR). Can also catalyze the conversion of lycopene to tetrahydrobisanhydrobacterioruberin (TH-BABR). The sequence is that of Lycopene elongase/hydratase from Halobacterium salinarum (strain ATCC 700922 / JCM 11081 / NRC-1) (Halobacterium halobium).